The chain runs to 395 residues: tRNA-specific 2-thiouridylase MnmA (395 aa).

Residues 6–13 (AMSGGVDS) and leucine 32 each bind ATP. Residue cysteine 101 is the Nucleophile of the active site. Cysteine 101 and cysteine 193 are disulfide-bonded. Glycine 125 contacts ATP. The interaction with tRNA stretch occupies residues 143-145 (KDQ). Residue cysteine 193 is the Cysteine persulfide intermediate of the active site.

It belongs to the MnmA/TRMU family.

The protein localises to the cytoplasm. It catalyses the reaction S-sulfanyl-L-cysteinyl-[protein] + uridine(34) in tRNA + AH2 + ATP = 2-thiouridine(34) in tRNA + L-cysteinyl-[protein] + A + AMP + diphosphate + H(+). Its function is as follows. Catalyzes the 2-thiolation of uridine at the wobble position (U34) of tRNA, leading to the formation of s(2)U34. This is tRNA-specific 2-thiouridylase MnmA from Corynebacterium jeikeium (strain K411).